A 334-amino-acid polypeptide reads, in one-letter code: Hemin transport system permease protein HmuU (334 aa).

A run of 9 helical transmembrane segments spans residues 9–29 (LMLG…ANMG), 60–80 (LLAV…QGLF), 96–116 (AALC…LLAL), 117–137 (YSHM…IFTL), 149–169 (LLAG…LTYI), 191–211 (WSTL…GLLQ), 244–264 (AILI…GLVV), 278–298 (WLLP…DTLA), and 306–326 (EMPV…WLIL).

The protein belongs to the binding-protein-dependent transport system permease family. FecCD subfamily.

It localises to the cell inner membrane. In terms of biological role, part of the binding-protein-dependent transport system for hemin; probably responsible for the translocation of the substrate across the membrane. This chain is Hemin transport system permease protein HmuU (hmuU), found in Yersinia pestis.